Reading from the N-terminus, the 507-residue chain is Phosphoprotein (507 aa).

The tract at residues 1–48 is interaction with N0; that stretch reads MAEEQARHVKNGLECIRALKAEPIGSLAVEEAMAAWSEISDNPGQDRA. Disordered stretches follow at residues 40-92, 133-168, 201-228, and 252-273; these read SDNP…DAET, SGLDGDSTLSGGDDESENSDVDIGEPDTEGYAITDR, NNFPKLGKTLNVPPPPNPSRASTSETPI, and TQCARKSPSEPSGPGAPAGNVP. S86 is modified (phosphoserine). Residues 133–143 show a composition bias toward low complexity; it reads SGLDGDSTLSG. The span at 144–160 shows a compositional bias: acidic residues; it reads GDDESENSDVDIGEPDT. S151 carries the phosphoserine modification. The segment covering 260–270 has biased composition (low complexity); it reads SEPSGPGAPAG. A multimerization region spans residues 304 to 376; sequence GDYYDDELFS…LSSIMIAIPG (73 aa). Interaction with the L polymerase regions lie at residues 361 to 377 and 396 to 410; these read STLEGHLSSIMIAIPGL and PIIGRDSGRALAEVL. Positions 457 to 507 are x domain (XD); the sequence is GPASRSVIRSIIKSSRLEEDRKRYLMTLLDDIKGANDLAKFHQMLMKIIMK. Positions 459–507 are interaction with the nucleocapsid (N-RNA); it reads ASRSVIRSIIKSSRLEEDRKRYLMTLLDDIKGANDLAKFHQMLMKIIMK.

It belongs to the morbillivirus P protein family. Homotetramer. Interacts (via multimerization domain and XD domain) with polymerase L; this interaction forms the polymerase L-P complex. Interacts (via N-terminus) with N0 (via Ncore); this interaction allows P to chaperon N0 to avoid N polymerization and non-specific RNA binding before encapsidation. Interacts (via C-terminus) with N-RNA template (via Ntail); this interaction maintains the P/L complex anchored to the nucleocapsid template during the sequential transcription. Interacts (via C-terminus) with protein C this interaction allows C to associate with the ribonucleocapsid. Post-translationally, phosphorylation on serines by host CK2 is necessary for the formation of viral factories.

In terms of biological role, essential cofactor of the RNA polymerase L that plays a central role in the transcription and replication by forming the polymerase complex with RNA polymerase L and recruiting L to the genomic N-RNA template for RNA synthesis. Also plays a central role in the encapsidation of nascent RNA chains by forming the encapsidation complex with the nucleocapsid protein N (N-P complex). Acts as a chaperone for newly synthesized free N protein, so-called N0, allowing encapsidation of nascent RNA chains during replication. The nucleoprotein protein N prevents excessive phosphorylation of P, which leads to down-regulation of viral transcription/ replication. Participates, together with N, in the formation of viral factories (viroplasms), which are large inclusions in the host cytoplasm where replication takes place. The chain is Phosphoprotein (P/V) from Homo sapiens (Human).